The sequence spans 327 residues: Microtubule-associated protein RP/EB family member 2 (327 aa).

The interval 1 to 21 (MPGPTQTLSPNGENNNDIIQD) is disordered. P2 bears the N-acetylalanine mark. S9 carries the phosphoserine modification. Residues 57–159 (TMSRHDIIAW…FIQWFKKFYD (103 aa)) form the Calponin-homology (CH) domain. Y167 carries the post-translational modification Phosphotyrosine. Disordered regions lie at residues 171 to 240 (EARQ…DKDL) and 299 to 327 (ASEE…QEEY). The tract at residues 187 to 327 (QIFNLPKKSH…EQQPPQQEEY (141 aa)) is DCTN1-binding. Over residues 200-234 (SPTAGAAKSSPAAKPGSTPSRPSSAKRASSSGSAS) the composition is skewed to low complexity. A phosphoserine mark is found at S219 and S236. An EB1 C-terminal domain is found at 236 to 306 (SDKDLETQVI…LYASEEHEGH (71 aa)). An APC-binding region spans residues 259–302 (EGVEKERDFYFGKLREIELLCQEHGQENDDLVQRLMDILYASEE). The span at 300–317 (SEEHEGHTEEPEAEEQAH) shows a compositional bias: basic and acidic residues. A compositionally biased stretch (low complexity) spans 318–327 (EQQPPQQEEY).

This sequence belongs to the MAPRE family. In terms of assembly, interacts with DCTN1. Interacts with APC (via C-terminal). Interacts with monomeric and polymerized tubulin. Interacts with SLAIN1. Interacts (via the N-terminal region) with BAG1. Interacts with ASB14. Interacts with HAX1; this interaction is essential for epidermal cell migration. Phosphorylated at Ser-236 by CK2 leading to enhanced cell adhesion. Phosphorylated by CDK1 and AURKB during mitosis reduces the binding affinity of MAPRE2 for microtubules. Post-translationally, ubiquitinated in an ASB14-dependent manner; leading to proteasomal degradation. In terms of tissue distribution, expressed in different tumor cell lines. Up-regulated in activated B- and T-lymphocytes.

The protein resides in the cytoplasm. The protein localises to the cytoskeleton. Adapter protein that is involved in microtubule polymerization, and spindle function by stabilizing microtubules and anchoring them at centrosomes. Therefore, ensures mitotic progression and genome stability. Acts as a central regulator of microtubule reorganization in apico-basal epithelial differentiation. Plays a role during oocyte meiosis by regulating microtubule dynamics. Participates in neurite growth by interacting with plexin B3/PLXNB3 and microtubule reorganization during apico-basal epithelial differentiation. Also plays an essential role for cell migration and focal adhesion dynamics. Mechanistically, recruits HAX1 to microtubules in order to regulate focal adhesion dynamics. This Homo sapiens (Human) protein is Microtubule-associated protein RP/EB family member 2 (MAPRE2).